We begin with the raw amino-acid sequence, 75 residues long: Xibalbin-13 2 (75 aa).

Positions 1–27 (MKEANTRRYIYLCLVVVLLSIIITTEA) are cleaved as a signal peptide. The propeptide occupies 28-30 (EDD). 4 disulfides stabilise this stretch: C34-C49, C41-C54, C48-C65, and C56-C63.

The protein belongs to the xibalbin-13 family. Expressed by the venom gland and the whole body.

It localises to the secreted. In terms of biological role, probable neurotoxin. Strongly inhibits voltage-gated potassium channels (Kv1.1/KCNA1, Kv1.2/KCNA2, Kv1.3/KCNA3, and Kv1.6/KCNA6, with the highest toxicity against Kv1.1 (85.1% inhibition at 1 uM)) and mildly inhibits sodium channels (Nav1.2/SCN2A, Nav1.4/SCN4A, Nav1.5/SCN5A, Nav1.6/SCN8A, and BgNav). Induces activation of protein kinase A type II (PKA-II) and MAP kinase Erk1/2 in primary nociceptive and non-nociceptive sensory neurons. Does not show cytotoxic activity. Does not have an impact on Ca2+, cAMP, and NO signaling in the cell types analyzed. Does not interfere with the adhesion of leukocytes to endothelial cells. The sequence is that of Xibalbin-13 2 from Xibalbanus tulumensis (Blind cave remipede).